Consider the following 89-residue polypeptide: Small ribosomal subunit protein uS14A (89 aa).

This sequence belongs to the universal ribosomal protein uS14 family. As to quaternary structure, part of the 30S ribosomal subunit. Contacts proteins S3 and S10.

In terms of biological role, binds 16S rRNA, required for the assembly of 30S particles and may also be responsible for determining the conformation of the 16S rRNA at the A site. This is Small ribosomal subunit protein uS14A from Lactiplantibacillus plantarum (strain ATCC BAA-793 / NCIMB 8826 / WCFS1) (Lactobacillus plantarum).